The chain runs to 287 residues: Beta-lactamase GES-1 (287 aa).

The first 18 residues, 1–18 (MRFIHALLLAGIAHSAYA), serve as a signal peptide directing secretion. A disulfide bond links cysteine 63 and cysteine 233. The active-site Nucleophile; acyl-ester intermediate is serine 64. A beta-lactam is bound by residues lysine 67, serine 125, glutamate 161, and threonine 232.

The protein belongs to the class-A beta-lactamase family. Monomer. May form dimers.

The catalysed reaction is a beta-lactam + H2O = a substituted beta-amino acid. With respect to regulation, inhibited by the beta-lactamase-blocking agents clavulanic acid, tazobactam, sulbactam and tazobactam and the carbapenem, imipenem. Inhibition by imipenem may involve Gly-165. Extended-spectrum beta-lactamase (ESBL) which confers resistance to penicillins, as well as first, second, third and fourth-generation cephalosporins. Has ceftazidime-hydrolyzing activity. Inactive against the carbapenems, imipenem, meropenem, ertapenem and doripenem. However, weak hydrolytic activity with respect to imipenem has also been reported. In Klebsiella pneumoniae, this protein is Beta-lactamase GES-1.